We begin with the raw amino-acid sequence, 52 residues long: UPF0057 membrane protein At1g57550 (52 aa).

2 helical membrane-spanning segments follow: residues 4-24 and 30-50; these read FLEV…RYGL and VCLL…IYVL.

This sequence belongs to the UPF0057 (PMP3) family.

It is found in the membrane. The sequence is that of UPF0057 membrane protein At1g57550 from Arabidopsis thaliana (Mouse-ear cress).